The primary structure comprises 147 residues: UPF0251 protein NT01CX_1491 (147 aa).

Belongs to the UPF0251 family.

This chain is UPF0251 protein NT01CX_1491, found in Clostridium novyi (strain NT).